A 138-amino-acid chain; its full sequence is Large ribosomal subunit protein uL16 (138 aa).

This sequence belongs to the universal ribosomal protein uL16 family. Part of the 50S ribosomal subunit.

Functionally, binds 23S rRNA and is also seen to make contacts with the A and possibly P site tRNAs. The sequence is that of Large ribosomal subunit protein uL16 from Anaeromyxobacter dehalogenans (strain 2CP-C).